A 1306-amino-acid chain; its full sequence is Angiotensin-converting enzyme (1306 aa).

The signal sequence occupies residues 1-29 (MGAASGRRGPGLLLPLPLLLLLPPQPALA). Residues 30–1256 (LDPGLQPGNF…GLDLDAQQAR (1227 aa)) are Extracellular-facing. Asn38, Asn54, Asn74, Glu103, Asn111, Ile121, Tyr140, Asn146, and Asn160 each carry an N-linked (GlcNAc...) asparagine glycan. 2 consecutive Peptidase M2 domains span residues 40 to 624 (SADE…LGWP) and 643 to 1222 (VTDE…LGWP). A disulfide bridge connects residues Cys157 and Cys165. Tyr231 contributes to the chloride binding site. 2 N-linked (GlcNAc...) asparagine glycosylation sites follow: Asn318 and Asn368. Cys359 and Cys377 are oxidised to a cystine. His390 is a Zn(2+) binding site. Glu391 (proton acceptor 1) is an active-site residue. 4 residues coordinate Zn(2+): His394, Pro414, Glu418, and Arg442. Asn445 and Asn509 each carry an N-linked (GlcNAc...) asparagine glycan. His520 functions as the Proton donor 1 in the catalytic mechanism. Arg529 serves as a coordination point for chloride. A disulfide bridge connects residues Cys545 and Cys557. Residues Asn617 and Asn677 are each glycosylated (N-linked (GlcNAc...) asparagine). 2 N-linked (GlcNAc...) (complex) asparagine glycosylation sites follow: Asn695 and Asn714. Cys757 and Cys763 are disulfide-bonded. A glycan (N-linked (GlcNAc...) asparagine; partial) is linked at Asn760. Positions 791 and 829 each coordinate chloride. Residue Asn942 is glycosylated (N-linked (GlcNAc...) asparagine; partial). The cysteines at positions 957 and 975 are disulfide-linked. A Zn(2+)-binding site is contributed by His988. The active-site Proton acceptor 2 is the Glu989. Positions 992 and 1016 each coordinate Zn(2+). Residues Trp1090 and Arg1094 each coordinate chloride. His1118 functions as the Proton donor 2 in the catalytic mechanism. Residue Arg1127 participates in chloride binding. Cys1143 and Cys1155 form a disulfide bridge. Residue Asn1191 is glycosylated (N-linked (GlcNAc...) asparagine; partial). Positions 1215-1256 (HGEKLGWPQYNWTPNSARSEGPLPDSGRVSFLGLDLDAQQAR) are juxtamembrane stalk. The helical transmembrane segment at 1257-1277 (VGQWLLLFLGIALLVATLGLS) threads the bilayer. Over 1278-1306 (QRLFSIRHRSLHRHSHGPQFGSEVELRHS) the chain is Cytoplasmic. Phosphoserine is present on Ser1299.

Belongs to the peptidase M2 family. As to quaternary structure, monomer and homodimer; homodimerizes following binding to an inhibitor. Interacts with calmodulin (CALM1, CALM2 or CALM3); interaction takes place in the cytoplasmic region and regulates phosphorylation and proteolytic cleavage. Zn(2+) is required as a cofactor. Chloride serves as cofactor. In terms of processing, produced following proteolytic cleavage by secretase enzymes that cleave the transmembrane form in the juxtamembrane stalk region upstream of the transmembrane region. Cleavage can take place at different sites of the juxtamembrane stalk region. Phosphorylated by CK2 on Ser-1299; which allows membrane retention. Phosphorylated on tyrosine residues on its extracellular part, promoting cleavage by secretase enzymes and formation of the soluble form (Angiotensin-converting enzyme, soluble form). Ubiquitously expressed, with highest levels in lung, kidney, heart, gastrointestinal system and prostate. As to expression, specifically expressed in spermatocytes and adult testis.

The protein resides in the cell membrane. The protein localises to the cytoplasm. Its subcellular location is the secreted. It carries out the reaction Release of a C-terminal dipeptide, oligopeptide-|-Xaa-Yaa, when Xaa is not Pro, and Yaa is neither Asp nor Glu. Thus, conversion of angiotensin I to angiotensin II, with increase in vasoconstrictor activity, but no action on angiotensin II.. The enzyme catalyses angiotensin I + H2O = L-histidyl-L-leucine + angiotensin II. It catalyses the reaction bradykinin + H2O = L-Phe-L-Arg + bradykinin(1-7). The catalysed reaction is substance P + H2O = substance P(1-9) + L-Leu-L-Met-NH2. It carries out the reaction substance P + H2O = substance P(1-8) + Gly-L-Leu-L-Met-NH2. The enzyme catalyses substance P + H2O = L-Phe-L-Phe-Gly-L-Leu-L-Met-NH2 + substance P(1-6). It catalyses the reaction neurotensin + H2O = neurotensin(1-11) + L-isoleucyl-L-leucine. The catalysed reaction is goralatide + H2O = N-acetyl-L-seryl-L-aspartate + L-lysyl-L-proline. It carries out the reaction Met-enkephalin + H2O = L-phenylalanyl-L-methionine + L-tyrosylglycylglycine. The enzyme catalyses Leu-enkephalin + H2O = L-tyrosylglycylglycine + L-phenylalanyl-L-leucine. It catalyses the reaction Met-enkephalin-Arg-Phe + H2O = L-arginyl-L-phenylalanine + Met-enkephalin. With respect to regulation, the dipeptidyl carboxypeptidase activity is strongly activated by chloride. The dipeptidyl carboxypeptidase activity is specifically inhibited by lisinopril, captopril and enalaprilat. Strongly inhibited by lisinopril and captopril. Dipeptidyl carboxypeptidase that removes dipeptides from the C-terminus of a variety of circulating hormones, such as angiotensin I, bradykinin or enkephalins, thereby playing a key role in the regulation of blood pressure, electrolyte homeostasis or synaptic plasticity. Composed of two similar catalytic domains, each possessing a functional active site, with different selectivity for substrates. Plays a major role in the angiotensin-renin system that regulates blood pressure and sodium retention by the kidney by converting angiotensin I to angiotensin II, resulting in an increase of the vasoconstrictor activity of angiotensin. Also able to inactivate bradykinin, a potent vasodilator, and therefore enhance the blood pressure response. Acts as a regulator of synaptic transmission by mediating cleavage of neuropeptide hormones, such as substance P, neurotensin or enkephalins. Catalyzes degradation of different enkephalin neuropeptides (Met-enkephalin, Leu-enkephalin, Met-enkephalin-Arg-Phe and possibly Met-enkephalin-Arg-Gly-Leu). Acts as a regulator of synaptic plasticity in the nucleus accumbens of the brain by mediating cleavage of Met-enkephalin-Arg-Phe, a strong ligand of Mu-type opioid receptor OPRM1, into Met-enkephalin. Met-enkephalin-Arg-Phe cleavage by ACE decreases activation of OPRM1, leading to long-term synaptic potentiation of glutamate release. Also acts as a regulator of hematopoietic stem cell differentiation by mediating degradation of hemoregulatory peptide N-acetyl-SDKP (AcSDKP). Acts as a regulator of cannabinoid signaling pathway by mediating degradation of hemopressin, an antagonist peptide of the cannabinoid receptor CNR1. Involved in amyloid-beta metabolism by catalyzing degradation of Amyloid-beta protein 40 and Amyloid-beta protein 42 peptides, thereby preventing plaque formation. Catalyzes cleavage of cholecystokinin (maturation of Cholecystokinin-8 and Cholecystokinin-5) and Gonadoliberin-1 (both maturation and degradation) hormones. Degradation of hemoregulatory peptide N-acetyl-SDKP (AcSDKP) and amyloid-beta proteins is mediated by the N-terminal catalytic domain, while angiotensin I and cholecystokinin cleavage is mediated by the C-terminal catalytic region. In terms of biological role, soluble form that is released in blood plasma and other body fluids following proteolytic cleavage in the juxtamembrane stalk region. Its function is as follows. Isoform produced by alternative promoter usage that is specifically expressed in spermatocytes and adult testis, and which is required for male fertility. In contrast to somatic isoforms, only contains one catalytic domain. Acts as a dipeptidyl carboxypeptidase that removes dipeptides from the C-terminus of substrates. The identity of substrates that are needed for male fertility is unknown. May also have a glycosidase activity which releases GPI-anchored proteins from the membrane by cleaving the mannose linkage in the GPI moiety. The GPIase activity was reported to be essential for the egg-binding ability of the sperm. This activity is however unclear and has been challenged by other groups, suggesting that it may be indirect. This is Angiotensin-converting enzyme from Homo sapiens (Human).